A 316-amino-acid polypeptide reads, in one-letter code: Lipoyl synthase (316 aa).

A compositionally biased stretch (basic and acidic residues) spans Met-1–Asp-19. A disordered region spans residues Met-1 to Val-31. The [4Fe-4S] cluster site is built by Cys-55, Cys-60, Cys-66, Cys-81, Cys-85, Cys-88, and Ser-295. The 218-residue stretch at Trp-67–Leu-284 folds into the Radical SAM core domain.

This sequence belongs to the radical SAM superfamily. Lipoyl synthase family. [4Fe-4S] cluster serves as cofactor.

Its subcellular location is the cytoplasm. It catalyses the reaction [[Fe-S] cluster scaffold protein carrying a second [4Fe-4S](2+) cluster] + N(6)-octanoyl-L-lysyl-[protein] + 2 oxidized [2Fe-2S]-[ferredoxin] + 2 S-adenosyl-L-methionine + 4 H(+) = [[Fe-S] cluster scaffold protein] + N(6)-[(R)-dihydrolipoyl]-L-lysyl-[protein] + 4 Fe(3+) + 2 hydrogen sulfide + 2 5'-deoxyadenosine + 2 L-methionine + 2 reduced [2Fe-2S]-[ferredoxin]. The protein operates within protein modification; protein lipoylation via endogenous pathway; protein N(6)-(lipoyl)lysine from octanoyl-[acyl-carrier-protein]: step 2/2. In terms of biological role, catalyzes the radical-mediated insertion of two sulfur atoms into the C-6 and C-8 positions of the octanoyl moiety bound to the lipoyl domains of lipoate-dependent enzymes, thereby converting the octanoylated domains into lipoylated derivatives. In Ruegeria sp. (strain TM1040) (Silicibacter sp.), this protein is Lipoyl synthase.